Reading from the N-terminus, the 383-residue chain is uncharacterized protein (383 aa).

Residues 1–23 form the signal peptide; it reads MKLTSIPIASTLLSLLAASGTLA.

It belongs to the but2 family.

The protein localises to the cytoplasm. It is found in the nucleus. This is an uncharacterized protein from Schizosaccharomyces pombe (strain 972 / ATCC 24843) (Fission yeast).